A 686-amino-acid chain; its full sequence is Translation initiation factor IF-2 (686 aa).

The tract at residues 61 to 98 is disordered; sequence FEVEEKVVRSKKNSNKKKKKGKGNEDKRQENFAGRQQT. The segment covering 69 to 81 has biased composition (basic residues); that stretch reads RSKKNSNKKKKKG. The 170-residue stretch at 188 to 357 folds into the tr-type G domain; that stretch reads ERPAVVTIMG…LLVSEVEEYK (170 aa). The segment at 197–204 is G1; sequence GHVDHGKT. 197-204 is a GTP binding site; the sequence is GHVDHGKT. The G2 stretch occupies residues 222–226; sequence GITQH. The tract at residues 243 to 246 is G3; that stretch reads DTPG. Residues 243-247 and 297-300 contribute to the GTP site; these read DTPGH and NKMD. The interval 297–300 is G4; sequence NKMD. The segment at 333–335 is G5; the sequence is SAI.

Belongs to the TRAFAC class translation factor GTPase superfamily. Classic translation factor GTPase family. IF-2 subfamily.

It is found in the cytoplasm. Functionally, one of the essential components for the initiation of protein synthesis. Protects formylmethionyl-tRNA from spontaneous hydrolysis and promotes its binding to the 30S ribosomal subunits. Also involved in the hydrolysis of GTP during the formation of the 70S ribosomal complex. This is Translation initiation factor IF-2 from Bacillus cereus (strain B4264).